We begin with the raw amino-acid sequence, 402 residues long: Dual-specificity RNA methyltransferase RlmN (402 aa).

E124 serves as the catalytic Proton acceptor. The Radical SAM core domain occupies 130–370 (DADRGTLCVS…APVRTPRGRD (241 aa)). C137 and C375 are oxidised to a cystine. C144, C148, and C151 together coordinate [4Fe-4S] cluster. Residues 199 to 200 (GE), S231, 253 to 255 (SLH), and N332 contribute to the S-adenosyl-L-methionine site. Catalysis depends on C375, which acts as the S-methylcysteine intermediate.

The protein belongs to the radical SAM superfamily. RlmN family. [4Fe-4S] cluster is required as a cofactor.

The protein localises to the cytoplasm. The catalysed reaction is adenosine(2503) in 23S rRNA + 2 reduced [2Fe-2S]-[ferredoxin] + 2 S-adenosyl-L-methionine = 2-methyladenosine(2503) in 23S rRNA + 5'-deoxyadenosine + L-methionine + 2 oxidized [2Fe-2S]-[ferredoxin] + S-adenosyl-L-homocysteine. It carries out the reaction adenosine(37) in tRNA + 2 reduced [2Fe-2S]-[ferredoxin] + 2 S-adenosyl-L-methionine = 2-methyladenosine(37) in tRNA + 5'-deoxyadenosine + L-methionine + 2 oxidized [2Fe-2S]-[ferredoxin] + S-adenosyl-L-homocysteine. Specifically methylates position 2 of adenine 2503 in 23S rRNA and position 2 of adenine 37 in tRNAs. m2A2503 modification seems to play a crucial role in the proofreading step occurring at the peptidyl transferase center and thus would serve to optimize ribosomal fidelity. This is Dual-specificity RNA methyltransferase RlmN from Rhizorhabdus wittichii (strain DSM 6014 / CCUG 31198 / JCM 15750 / NBRC 105917 / EY 4224 / RW1) (Sphingomonas wittichii).